We begin with the raw amino-acid sequence, 715 residues long: MIYEGKAITVKALESGIVELKFDLKGESVNKFNRLTLNELRQAVDAIKADASVKGVIVSSGKDVFIVGADITEFVDNFKLPEAELVAGNLEANRIFSDFEDLEVPTVAAINGIALGGGLEMCLAADYRIMSSSAKIGLPEVKLGIYPGFGGTVRLPRLIGSDNAIEWIAAGKENRAEDALKVGAVDAVVAPELLQAGALDLIKRAISGELDHKAKRQPKLEKLKLNAIEQMMAFETAKGFVAGQAGPNYPAPVEAIKTIQKAANFGRDKALEVEAAGFAKLARTSVAESLIGLFLNDQELKRKAKAHDEIAHDVKQAAVLGAGIMGGGIAYQSAVKGTPILMKDIREEAIQLGLNEASKLLGKRVEKGRLTPAKMAEALNAIRPTLSYGDFGNVDIVVEAVVENPKVKQAVLAEVEGQVKEDAILASNTSTISINLLAKALKRPENFVGMHFFNPVHMMPLVEVIRGEKSSEVAVATTVAYAKKMGKNPIVVNDCPGFLVNRVLFPYFGGFAKLVSAGVDFVRIDKVMEKFGWPMGPAYLMDVVGIDTGHHGRDVMAEGFPDRMKDDRRSAVDALYEANRLGQKNGKGFYAYETDKRGKPKKVADASVLDVLKPVIFEQREVSDEDIINWMMVPLCLETVRCLEDGIVETAAEADMGLVYGIGFPPFRGGALRYIDSIGVAEFVALADKYADLGPLYHATAKLREMAKNGQRFFN.

An enoyl-CoA hydratase/isomerase region spans residues 1-190 (MIYEGKAITV…KVGAVDAVVA (190 aa)). Aspartate 297 contacts substrate. Positions 312–715 (HDVKQAAVLG…MAKNGQRFFN (404 aa)) are 3-hydroxyacyl-CoA dehydrogenase. Residues methionine 325, aspartate 344, 401–403 (VVE), lysine 408, and serine 430 contribute to the NAD(+) site. Histidine 451 acts as the For 3-hydroxyacyl-CoA dehydrogenase activity in catalysis. Residue asparagine 454 coordinates NAD(+). Positions 501 and 660 each coordinate substrate.

This sequence in the N-terminal section; belongs to the enoyl-CoA hydratase/isomerase family. In the C-terminal section; belongs to the 3-hydroxyacyl-CoA dehydrogenase family. As to quaternary structure, heterotetramer of two alpha chains (FadB) and two beta chains (FadA).

It catalyses the reaction a (3S)-3-hydroxyacyl-CoA + NAD(+) = a 3-oxoacyl-CoA + NADH + H(+). The catalysed reaction is a (3S)-3-hydroxyacyl-CoA = a (2E)-enoyl-CoA + H2O. The enzyme catalyses a 4-saturated-(3S)-3-hydroxyacyl-CoA = a (3E)-enoyl-CoA + H2O. It carries out the reaction (3S)-3-hydroxybutanoyl-CoA = (3R)-3-hydroxybutanoyl-CoA. It catalyses the reaction a (3Z)-enoyl-CoA = a 4-saturated (2E)-enoyl-CoA. The catalysed reaction is a (3E)-enoyl-CoA = a 4-saturated (2E)-enoyl-CoA. It participates in lipid metabolism; fatty acid beta-oxidation. Involved in the aerobic and anaerobic degradation of long-chain fatty acids via beta-oxidation cycle. Catalyzes the formation of 3-oxoacyl-CoA from enoyl-CoA via L-3-hydroxyacyl-CoA. It can also use D-3-hydroxyacyl-CoA and cis-3-enoyl-CoA as substrate. In Pseudomonas entomophila (strain L48), this protein is Fatty acid oxidation complex subunit alpha.